Consider the following 435-residue polypeptide: GTPase Obg (435 aa).

One can recognise an Obg domain in the interval 1–158; that stretch reads MFLDTAKVSV…RQLELELKIL (158 aa). The 178-residue stretch at 159–336 folds into the OBG-type G domain; that stretch reads ADVGLVGFPS…LLEATAELLA (178 aa). Residues 165-172, 190-194, 212-215, 282-285, and 317-319 contribute to the GTP site; these read GFPSVGKS, FTTIV, DLPG, NKMD, and SSL. Mg(2+)-binding residues include Ser-172 and Thr-192. The 79-residue stretch at 357–435 folds into the OCT domain; the sequence is GFAAEEKAFE…IGKFEFEFVD (79 aa).

It belongs to the TRAFAC class OBG-HflX-like GTPase superfamily. OBG GTPase family. Monomer. It depends on Mg(2+) as a cofactor.

The protein localises to the cytoplasm. An essential GTPase which binds GTP, GDP and possibly (p)ppGpp with moderate affinity, with high nucleotide exchange rates and a fairly low GTP hydrolysis rate. Plays a role in control of the cell cycle, stress response, ribosome biogenesis and in those bacteria that undergo differentiation, in morphogenesis control. The chain is GTPase Obg from Streptococcus equi subsp. zooepidemicus (strain MGCS10565).